The chain runs to 172 residues: Interferon tau-2 (172 aa).

Cystine bridges form between Cys-1–Cys-99 and Cys-29–Cys-139. Asn-78 is a glycosylation site (N-linked (GlcNAc...) asparagine).

Belongs to the alpha/beta interferon family. IFN-alphaII subfamily. As to expression, constitutively and exclusively expressed in the mononuclear cells of the extraembryonic trophectoderm.

It localises to the secreted. Functionally, paracrine hormone primarily responsible for maternal recognition of pregnancy. Interacts with endometrial receptors, probably type I interferon receptors, and blocks estrogen receptor expression, preventing the estrogen-induced increase in oxytocin receptor expression in the endometrium. This results in the suppression of the pulsatile endometrial release of the luteolytic hormone prostaglandin F2-alpha, hindering the regression of the corpus luteum (luteolysis) and therefore a return to ovarian cyclicity. This, and a possible direct effect of IFN-tau on prostaglandin synthesis, leads in turn to continued ovarian progesterone secretion, which stimulates the secretion by the endometrium of the nutrients required for the growth of the conceptus. In summary, displays particularly high antiviral and antiproliferative potency concurrently with particular weak cytotoxicity, high antiluteolytic activity and immunomodulatory properties. In contrast with other IFNs, IFN-tau is not virally inducible. This is Interferon tau-2 (IFNT2) from Bos taurus (Bovine).